A 343-amino-acid chain; its full sequence is Trace amine-associated receptor 3 (343 aa).

The Extracellular portion of the chain corresponds to 1-35; it reads MDLIYIPEDLSSCPKFGNKSCPPTNRSFRVRMIMY. N18 and N25 each carry an N-linked (GlcNAc...) asparagine glycan. 2 cysteine pairs are disulfide-bonded: C21-C185 and C104-C189. The helical transmembrane segment at 36–56 threads the bilayer; the sequence is LFMTGAMVITIFGNLVIIISI. The Cytoplasmic segment spans residues 57 to 68; sequence SHFKQLHSPTNF. A helical transmembrane segment spans residues 69–89; it reads LILSMATTDFLLGFVIMPYSM. Residues 90-150 are Extracellular-facing; the sequence is VRSVESCWYF…TTMTVSMIKR (61 aa). The chain crosses the membrane as a helical span at residues 151–168; that stretch reads LLAFCWAAPALFSFGLVL. The Cytoplasmic segment spans residues 169-172; the sequence is SEAN. Residues 173–186 are extracellular Loop 2 (ECL2); it reads VSGMQSYEILVACF. The helical transmembrane segment at 173 to 193 threads the bilayer; the sequence is VSGMQSYEILVACFNFCALTF. Over 194–198 the chain is Extracellular; it reads NKFWG. Residues 199 to 223 traverse the membrane as a helical segment; the sequence is TILFTTCFFTPGSIMVGIYGKIFIV. At 224–257 the chain is on the cytoplasmic side; sequence SRRHARALSDMPANTKGAVGKNLSKKKDRKAAKT. The helical transmembrane segment at 258–278 threads the bilayer; sequence LGIVMGVFLACWLPCFLAVLI. Residues 279-287 lie on the Extracellular side of the membrane; it reads DPYLDYSTP. Residues 288-308 traverse the membrane as a helical segment; sequence IIVLDLLVWLGYFNSTCNPLI. Residues 309–343 are Cytoplasmic-facing; the sequence is HGFFYPWFRKALQFIVSGKIFRSNSDTANLFPEAH.

It belongs to the G-protein coupled receptor 1 family. Specifically expressed in neurons of the olfactory epithelium.

Its subcellular location is the cell membrane. Its function is as follows. Olfactory receptor activated by several primary trace amines, including isoamylamine. Activated by isoamylamine and cyclohexylamine, but not to the corresponding alcohols, isoamylalcohol and cyclohexanol. This receptor is probably mediated by the G(s)-class of G-proteins which activate adenylate cyclase. The sequence is that of Trace amine-associated receptor 3 from Mus musculus (Mouse).